The chain runs to 322 residues: Replication factor C small subunit (322 aa).

46–53 (GSAGIGKT) is a binding site for ATP.

The protein belongs to the activator 1 small subunits family. RfcS subfamily. Heteromultimer composed of small subunits (RfcS) and large subunits (RfcL).

Its function is as follows. Part of the RFC clamp loader complex which loads the PCNA sliding clamp onto DNA. The chain is Replication factor C small subunit from Methanoculleus marisnigri (strain ATCC 35101 / DSM 1498 / JR1).